A 368-amino-acid chain; its full sequence is Homoserine dehydrogenase (368 aa).

Val12, Gly14, and Val15 together coordinate NAD(+). Val15 provides a ligand contact to NADP(+). Residues Val15, Lys59, Thr95, Ser96, and Lys119 each coordinate NADPH. Thr95 provides a ligand contact to NAD(+). Thr95 is a binding site for NADP(+). Lys119 contributes to the NADP(+) binding site. Na(+) contacts are provided by Glu146, Val149, Ala151, and Leu153. Residues Gly209 and Glu212 each contribute to the NADP(+) site. Positions 212 and 223 each coordinate L-homoserine. The Proton donor role is filled by Lys227. Gly349 contacts NAD(+). Gly349 lines the NADP(+) pocket. NADPH is bound at residue Gly349.

Belongs to the homoserine dehydrogenase family. A metal cation is required as a cofactor.

It catalyses the reaction L-homoserine + NADP(+) = L-aspartate 4-semialdehyde + NADPH + H(+). It carries out the reaction L-homoserine + NAD(+) = L-aspartate 4-semialdehyde + NADH + H(+). The protein operates within amino-acid biosynthesis; L-methionine biosynthesis via de novo pathway; L-homoserine from L-aspartate: step 3/3. Its pathway is amino-acid biosynthesis; L-threonine biosynthesis; L-threonine from L-aspartate: step 3/5. Its function is as follows. Catalyzes the conversion of L-aspartate-beta-semialdehyde (L-Asa) to L-homoserine (L-Hse), the third step in the biosynthesis of amino acids that derive from aspartate (the aspartate family of amino acids), including methioinine and threonine, the latter of which is a precursor to isoleucine; production of homoserine leads to a branch-point in the pathway as it can either be O-phosphorylated for processing to threonine, or O-acylated for processing to methionine. This Emericella nidulans (strain FGSC A4 / ATCC 38163 / CBS 112.46 / NRRL 194 / M139) (Aspergillus nidulans) protein is Homoserine dehydrogenase.